Consider the following 102-residue polypeptide: MKKIRKGDSVVLLTGRDKGKQGTVTAVLENKLVIEGVNIYKKSVKPNPAAGVTGGMIDKTMPVHISNVAVVDGNGKPSRVGIKLVDGKKQRFLKTTGATLSA.

It belongs to the universal ribosomal protein uL24 family. Part of the 50S ribosomal subunit.

Its function is as follows. One of two assembly initiator proteins, it binds directly to the 5'-end of the 23S rRNA, where it nucleates assembly of the 50S subunit. Functionally, one of the proteins that surrounds the polypeptide exit tunnel on the outside of the subunit. The sequence is that of Large ribosomal subunit protein uL24 from Polynucleobacter asymbioticus (strain DSM 18221 / CIP 109841 / QLW-P1DMWA-1) (Polynucleobacter necessarius subsp. asymbioticus).